We begin with the raw amino-acid sequence, 272 residues long: Shikimate dehydrogenase (NADP(+)) (272 aa).

Residues 14–16 (SKS) and Thr61 contribute to the shikimate site. Lys65 (proton acceptor) is an active-site residue. Glu77 is an NADP(+) binding site. Residues Asn86 and Asp102 each contribute to the shikimate site. Residues 126 to 130 (GAGGA), 149 to 154 (NRTASR), and Met213 each bind NADP(+). Tyr215 serves as a coordination point for shikimate. Gly237 contributes to the NADP(+) binding site.

This sequence belongs to the shikimate dehydrogenase family. In terms of assembly, homodimer.

It carries out the reaction shikimate + NADP(+) = 3-dehydroshikimate + NADPH + H(+). It functions in the pathway metabolic intermediate biosynthesis; chorismate biosynthesis; chorismate from D-erythrose 4-phosphate and phosphoenolpyruvate: step 4/7. Functionally, involved in the biosynthesis of the chorismate, which leads to the biosynthesis of aromatic amino acids. Catalyzes the reversible NADPH linked reduction of 3-dehydroshikimate (DHSA) to yield shikimate (SA). In Salmonella choleraesuis (strain SC-B67), this protein is Shikimate dehydrogenase (NADP(+)).